A 471-amino-acid chain; its full sequence is N(6)-adenine-specific methyltransferase METTL4 (471 aa).

The protein belongs to the MT-A70-like family.

The protein localises to the nucleus. The enzyme catalyses a 2'-O-methyladenosine in U2 snRNA + S-adenosyl-L-methionine = an N(6)-methyl-2'-O-methyladenosine in U2 snRNA + S-adenosyl-L-homocysteine + H(+). It carries out the reaction a 2'-deoxyadenosine in DNA + S-adenosyl-L-methionine = an N(6)-methyl-2'-deoxyadenosine in DNA + S-adenosyl-L-homocysteine + H(+). In terms of biological role, n(6)-adenine-specific methyltransferase that can methylate both RNAs and DNA. Acts as a N(6)-adenine-specific RNA methyltransferase by catalyzing formation of N6,2'-O-dimethyladenosine (m6A(m)) on internal positions of U2 small nuclear RNA (snRNA): methylates the 6th position of adenine residues with a pre-deposited 2'-O-methylation. Internal m6A(m) methylation of snRNAs regulates RNA splicing. Also able to act as a N(6)-adenine-specific DNA methyltransferase by mediating methylation of DNA on the 6th position of adenine (N(6)-methyladenosine). The existence of N(6)-methyladenosine (m6A) on DNA is however unclear in mammals, and additional evidences are required to confirm the role of the N(6)-adenine-specific DNA methyltransferase activity of METTL4 in vivo. Acts as a regulator of mitochondrial transcript levels and mitochondrial DNA (mtDNA) copy number by mediating mtDNA N(6)-methylation: m6A on mtDNA reduces transcription by repressing TFAM DNA-binding and bending. N(6)-methyladenosine deposition by METTL4 regulates Polycomb silencing by triggering ubiquitination and degradation of sensor proteins ASXL1 and MPND, leading to inactivation of the PR-DUB complex and subsequent preservation of Polycomb silencing. In Mus musculus (Mouse), this protein is N(6)-adenine-specific methyltransferase METTL4.